A 696-amino-acid chain; its full sequence is F-box/LRR-repeat protein 5 (696 aa).

A hemerythrin-like region spans residues 1–159; the sequence is MAPFPDEVDV…IKKQVIAQHS (159 aa). His15, His57, Glu58, Glu61, His80, His126, and Glu130 together coordinate Fe(3+). Positions 205 to 251 constitute an F-box domain; the sequence is STHISQLPTEILLCLFRYLGPEDLCHCGQVCSAWSDLAKTGSLWRHL. LRR repeat units lie at residues 343–367, 368–395, 396–421, 582–612, 613–640, and 641–666; these read SSTV…LDLT, QTDV…DLSG, CEKL…TCSE, CSSG…SLSG, CYQV…NLSG, and CLLI…HFYY. 4 residues coordinate [2Fe-2S] cluster: Cys667, Cys681, Cys691, and Cys692.

In terms of assembly, part of a SCF (SKP1-cullin-F-box) protein ligase complex. [2Fe-2S] cluster is required as a cofactor. In terms of processing, ubiquitinated upon iron and oxygen depletion, leading to its degradation by the proteasome. Ubiquitination is regulated by the hemerythrin-like region that acts as an oxygen and iron sensor.

Its subcellular location is the cytoplasm. It is found in the perinuclear region. It localises to the nucleus. It participates in protein modification; protein ubiquitination. In terms of biological role, component of some SCF (SKP1-cullin-F-box) protein ligase complex that plays a central role in iron homeostasis by promoting the ubiquitination and subsequent degradation of ireb2/irp2. Upon high iron and oxygen level, it specifically recognizes and binds ireb2/irp2, promoting its ubiquitination and degradation by the proteasome. The sequence is that of F-box/LRR-repeat protein 5 (fbxl5) from Salmo salar (Atlantic salmon).